We begin with the raw amino-acid sequence, 226 residues long: uncharacterized protein (226 aa).

A Response regulatory domain is found at 1–112 (MLVEDDHSIS…ELTARVKAAI (112 aa)). The residue at position 48 (Asp48) is a 4-aspartylphosphate. Residues 126-225 (NKVIRIHQLA…LWGIGYKLGE (100 aa)) constitute a DNA-binding region (ompR/PhoB-type).

Phosphorylated by YcbM.

The protein localises to the cytoplasm. Member of the two-component regulatory system YcbM/YcbL. This is an uncharacterized protein from Bacillus subtilis (strain 168).